A 276-amino-acid polypeptide reads, in one-letter code: Aliphatic sulfonates import ATP-binding protein SsuB 1 (276 aa).

Residues 1–21 (MSTGNVTTLRRPEAPPSLPAG) form a disordered region. Residues 39 to 259 (FSFRNVTKSF…RHGTPEFARL (221 aa)) form the ABC transporter domain. Residue 71-78 (GKSGCGKS) coordinates ATP.

The protein belongs to the ABC transporter superfamily. Aliphatic sulfonates importer (TC 3.A.1.17.2) family. As to quaternary structure, the complex is composed of two ATP-binding proteins (SsuB), two transmembrane proteins (SsuC) and a solute-binding protein (SsuA).

It localises to the cell inner membrane. The catalysed reaction is ATP + H2O + aliphatic sulfonate-[sulfonate-binding protein]Side 1 = ADP + phosphate + aliphatic sulfonateSide 2 + [sulfonate-binding protein]Side 1.. Part of the ABC transporter complex SsuABC involved in aliphatic sulfonates import. Responsible for energy coupling to the transport system. This is Aliphatic sulfonates import ATP-binding protein SsuB 1 from Agrobacterium fabrum (strain C58 / ATCC 33970) (Agrobacterium tumefaciens (strain C58)).